The primary structure comprises 498 residues: Glycerol kinase (498 aa).

Threonine 11 contributes to the ADP binding site. Threonine 11, serine 12, and serine 13 together coordinate ATP. Residue threonine 11 coordinates sn-glycerol 3-phosphate. Position 15 (arginine 15) interacts with ADP. Residues arginine 81, glutamate 82, tyrosine 133, and aspartate 242 each coordinate sn-glycerol 3-phosphate. Glycerol-binding residues include arginine 81, glutamate 82, tyrosine 133, aspartate 242, and glutamine 243. Positions 264 and 307 each coordinate ADP. 4 residues coordinate ATP: threonine 264, glycine 307, glutamine 311, and glycine 412. Residues glycine 412 and asparagine 416 each coordinate ADP.

It belongs to the FGGY kinase family.

It catalyses the reaction glycerol + ATP = sn-glycerol 3-phosphate + ADP + H(+). It functions in the pathway polyol metabolism; glycerol degradation via glycerol kinase pathway; sn-glycerol 3-phosphate from glycerol: step 1/1. Inhibited by fructose 1,6-bisphosphate (FBP). In terms of biological role, key enzyme in the regulation of glycerol uptake and metabolism. Catalyzes the phosphorylation of glycerol to yield sn-glycerol 3-phosphate. This is Glycerol kinase from Delftia acidovorans (strain DSM 14801 / SPH-1).